The following is a 65-amino-acid chain: U15-hexatoxin-Mg1a (65 aa).

Post-translationally, contains 4 disulfide bonds. As to expression, expressed by the venom gland.

It is found in the secreted. Its function is as follows. Intrathorax injection into crickets causes paralysis prolonged for more than 60 minutes, followed by recovery. The chain is U15-hexatoxin-Mg1a from Macrothele gigas (Japanese funnel web spider).